We begin with the raw amino-acid sequence, 858 residues long: Adenylate cyclase, germination specific (858 aa).

At 1–18 (MKKTFVKILSKSYVEGYP) the chain is on the cytoplasmic side. A helical; Signal-anchor for type II membrane protein transmembrane segment spans residues 19–41 (VGFFIGLIILAIFGSMVCIFSFM). The Extracellular segment spans residues 42 to 858 (HYSEEENSNI…DENVESKKNK (817 aa)). Positions 86–317 (VNPNFDRNDF…DCVLKLWIFT (232 aa)) constitute a CHASE domain. The 131-residue stretch at 396-526 (CVFFLDIAGF…DTVNVASRME (131 aa)) folds into the Guanylate cyclase domain. The Mg(2+) site is built by Asp401, Ile402, and Asp445. Disordered stretches follow at residues 650–691 (YYYH…YHDT), 767–803 (SDNV…STNE), and 827–858 (ENCD…KKNK). Low complexity-rich tracts occupy residues 767 to 778 (SDNVNNYENNNN), 788 to 797 (GDNNNINDNN), and 834 to 849 (DNNN…NNND).

This sequence belongs to the adenylyl cyclase class-4/guanylyl cyclase family.

It localises to the membrane. The enzyme catalyses ATP = 3',5'-cyclic AMP + diphosphate. Its activity is regulated as follows. Insensitive to guanine nucleotides. Functionally, has a large extracellular domain which may be involved in the recognition of an extracellular signal present during germination, leading to activation or inhibition of cAMP synthesis by the cytoplasmic domain. This Dictyostelium discoideum (Social amoeba) protein is Adenylate cyclase, germination specific (acgA).